A 504-amino-acid polypeptide reads, in one-letter code: Arabinose import ATP-binding protein AraG (504 aa).

ABC transporter domains lie at 8–243 (LSFR…MVGR) and 256–499 (YGEE…MPKV). Residue 40 to 47 (GENGAGKS) coordinates ATP.

It belongs to the ABC transporter superfamily. Arabinose importer (TC 3.A.1.2.2) family. As to quaternary structure, the complex is composed of two ATP-binding proteins (AraG), two transmembrane proteins (AraH) and a solute-binding protein (AraF).

The protein localises to the cell inner membrane. The catalysed reaction is L-arabinose(out) + ATP + H2O = L-arabinose(in) + ADP + phosphate + H(+). Its function is as follows. Part of the ABC transporter complex AraFGH involved in arabinose import. Responsible for energy coupling to the transport system. This chain is Arabinose import ATP-binding protein AraG, found in Shigella dysenteriae serotype 1 (strain Sd197).